A 331-amino-acid polypeptide reads, in one-letter code: 6-phosphogluconolactonase (331 aa).

Residue Lys287 is modified to N6-acetyllysine.

The protein belongs to the cycloisomerase 2 family.

It catalyses the reaction 6-phospho-D-glucono-1,5-lactone + H2O = 6-phospho-D-gluconate + H(+). It participates in carbohydrate degradation; pentose phosphate pathway; D-ribulose 5-phosphate from D-glucose 6-phosphate (oxidative stage): step 2/3. Functionally, catalyzes the hydrolysis of 6-phosphogluconolactone to 6-phosphogluconate. The protein is 6-phosphogluconolactonase of Escherichia coli (strain SMS-3-5 / SECEC).